The sequence spans 906 residues: Protein translocase subunit SecA (906 aa).

Residues Gln87, 105 to 109 (GEGKT), and Asp507 contribute to the ATP site. Positions 890, 892, 901, and 902 each coordinate Zn(2+).

Belongs to the SecA family. In terms of assembly, monomer and homodimer. Part of the essential Sec protein translocation apparatus which comprises SecA, SecYEG and auxiliary proteins SecDF-YajC and YidC. The cofactor is Zn(2+).

The protein localises to the cell inner membrane. Its subcellular location is the cytoplasm. It carries out the reaction ATP + H2O + cellular proteinSide 1 = ADP + phosphate + cellular proteinSide 2.. In terms of biological role, part of the Sec protein translocase complex. Interacts with the SecYEG preprotein conducting channel. Has a central role in coupling the hydrolysis of ATP to the transfer of proteins into and across the cell membrane, serving both as a receptor for the preprotein-SecB complex and as an ATP-driven molecular motor driving the stepwise translocation of polypeptide chains across the membrane. This is Protein translocase subunit SecA from Laribacter hongkongensis (strain HLHK9).